A 371-amino-acid polypeptide reads, in one-letter code: SufE-like protein 1, chloroplastic/mitochondrial (371 aa).

Residues M1–S66 constitute a chloroplast and mitochondrion transit peptide. C131 functions as the Cysteine persulfide intermediate in the catalytic mechanism. Residue C131 is modified to S-glutathionyl cysteine. The tract at residues V218–V249 is disordered.

This sequence belongs to the SufE family. As to quaternary structure, heterotetramer with NFS2. Interacts with NFS2 and NIFS1. Interacts in vitro with GRXS14, GRXS15, GRXS16 and GRXS17, but not with GRXC5. Interacts in vivo only with GRXS14 and GRXS16. Glutathionylated. Glutathionylation strongly reduces the stimulation of NFS2 activity. In terms of tissue distribution, expressed in roots, leaves, stems and flowers.

The protein resides in the plastid. Its subcellular location is the chloroplast stroma. It localises to the mitochondrion. Its pathway is cofactor biosynthesis; iron-sulfur cluster biosynthesis. Participates in cysteine desulfurization mediated by NFS2 in chloroplast and NIFS1 in mitochondrion. Activates the cysteine desulfurase activity of NFS2. Cysteine desulfurization mobilizes sulfur from L-cysteine to yield L-alanine and supplies the inorganic sulfur for iron-sulfur (Fe-S) cluster formation. Glutaredoxins regulate SUFE1 activity by inducing its reduction and deglutathionylation. This is SufE-like protein 1, chloroplastic/mitochondrial from Arabidopsis thaliana (Mouse-ear cress).